Here is a 571-residue protein sequence, read N- to C-terminus: Septation ring formation regulator EzrA (571 aa).

Topologically, residues M1–Y3 are extracellular. The helical transmembrane segment at M4–L22 threads the bilayer. The Cytoplasmic segment spans residues K23–E571. Coiled coils occupy residues L248 to E298, D326 to E374, K400 to R437, and R478 to F529.

The protein belongs to the EzrA family.

The protein localises to the cell membrane. Negative regulator of FtsZ ring formation; modulates the frequency and position of FtsZ ring formation. Inhibits FtsZ ring formation at polar sites. Interacts either with FtsZ or with one of its binding partners to promote depolymerization. This Listeria monocytogenes serovar 1/2a (strain ATCC BAA-679 / EGD-e) protein is Septation ring formation regulator EzrA.